A 96-amino-acid chain; its full sequence is U-reduvitoxin-Pr12a (96 aa).

The first 20 residues, 1-20 (MKTALLLFFALVFIAFETEA), serve as a signal peptide directing secretion. 3 cysteine pairs are disulfide-bonded: Cys21–Cys38, Cys33–Cys53, and Cys36–Cys47. 2 Pacifastin domains span residues 21–55 (CRPG…ICPP) and 59–94 (KLEC…CIHK). Positions 54-56 (PPR) are pro-Pro-Arg motif necessary for proteolytic processing. 3 cysteine pairs are disulfide-bonded: Cys62/Cys77, Cys72/Cys91, and Cys75/Cys86.

The protein belongs to the protease inhibitor I19 family. Expressed by the venom gland.

It localises to the secreted. In terms of biological role, inhibits trypsin activity and prophenoloxidase (PPO) activation, an enzyme essential for both clotting and insect innate immune responses. It does not inhibit activity of chymotrypsin and protease K, and has no effect on phenoloxidase (PO) activity. The chain is U-reduvitoxin-Pr12a from Platymeris rhadamanthus (Red spot assassin bug).